The sequence spans 166 residues: uncharacterized protein (166 aa).

This sequence to C.perfringens pCP13 PCP12.

This is an uncharacterized protein from Clostridium perfringens.